The sequence spans 1296 residues: MAYDVTGLWLESDLTADEEAFVSFYTSRTGTLTLVPGGTGGYYLLWITFRRPPTSREERERRDVEIQTVLAVLSPLLGYPHVIRRSPPRGSERVVSFGYGPNINHRPTTLSTELGVLLRELGLQEWARVEVGRHLVSKITQTLLEPHPPQFIRAFTQNTDLVPYEGLEVPEGPQPVARPHIEDDVIMQAVMISLGADLLPLAVQASTGDNYNVARYFVIPGRCTMERWPWNCARQAFGIHGAYTHVHSSVQRGIRGLGNLLFHSTLFPGGQTQGALTGLYATEPALGPRAHSRFRRIFAKGVQQAEMLQGAGVPTLGGFLKTVRTIATTPGNALAVCSISTTTSKECISLRRMIPQQTVVCLGRFEPTDGPDTYPNLYRDSSDNAVRILETLKLVQRLAKGPIFSGLNRSHDPAPVVRHLQALAPRTGLELFVSKLPDEVRAHLPADPAAGPDAVEAAVAEHFLNVYCSLVFAVVAESGAVPGDLGETPLEVLQRAARLCACQITVLGRTSEQPGIRIVDDLTGETTRVFSVDQPSSTPPSPWLALSDGVRVSGHPEDVDWGLFATGSTIHQLLRHATVGSKEFFTRHMDRCSNGLIAQQAGVGPLDIPVSDYHLVLHSSMLAERVAPRVPDTVEAITPSMANLLHKDFETWVKALPQELLPVPAWRGQAMAMGEQAYKMATNVSTGATYAITEALTNLMFSPVSKLQDVVLTGAVAWSPEDHQAGLLQECLFACKEFCRELGVALSISSAASSPTLSERHVRITQQQETVEVLPFNSVVFTSWAEVKGSRYRVTPDVKVEGNALVYLAVNQSCLIAGSTFEHNFLASRHPIPPLNPSTVASLFMLVKYLMSKRLIVSGHDIGDGGLLPSAIEMALAGCRGLQLSLPAHPNPLELMVSETPGALVEVPQVHLSEVLRAARDYRCVAHPLGTVGPEGQGNNVTILQNETVVFQETLTSLQVSWTSFSDEMWNLVTPPLHPLEDMHRKDLGRLEHHLGSLRAMCLGSQLRLFSCPTSPRRVAALVLPGSSAPYALMAALQNTGFEVATVTVEELKRGQSLSGFSGLITCLRTGCQASYASARGWVLALCNDPTCASTLTEFLNRPDTFSICCGEVGFQLLVALGVVGRSESSPYTYGPTPPQRWAVNLETNVSKLYDSHWLNIQIPQNTKSVFLRVLRGTVLPSWAQGEYLGVRYEQDALEYILRQRGEITLTYHGNAADETLPARHYPRNPTGNSTVAGLTSSDGRHAALIIDPSLMFHPWQWQHVPPDLTPLSMSPWAMAFQSIYLWSVKKINDHH.

It localises to the virion tegument. This chain is Protein ORF75 (ORF75), found in Homo sapiens (Human).